The following is a 558-amino-acid chain: Glypican-1 (558 aa).

A signal peptide spans 1–23 (MELRARGWWLLCAAAALVACTRG). Disulfide bonds link cysteine 32–cysteine 68, cysteine 62–cysteine 256, cysteine 69–cysteine 259, cysteine 191–cysteine 343, cysteine 246–cysteine 279, cysteine 268–cysteine 415, and cysteine 272–cysteine 401. N-linked (GlcNAc...) asparagine glycosylation is found at asparagine 79 and asparagine 116. The segment at 478–531 (FQDASDDGSGSGSGGGCPDDACGRRVSKKSSSSRTPLIHALPGLSEQEGQKTSA) is disordered. Residues serine 486, serine 488, and serine 490 are each glycosylated (O-linked (Xyl...) (heparan sulfate) serine). Serine 530 carries the GPI-anchor amidated serine lipid modification. Residues 531–558 (AATRPEPHYFFLLFLFTLVLAAARPRWR) constitute a propeptide, removed in mature form.

This sequence belongs to the glypican family. Post-translationally, S-nitrosylated in a Cu(2+)-dependent manner. Nitric acid (NO) is released from the nitrosylated cysteines by ascorbate or by some other reducing agent, in a Cu(2+) or Zn(2+) dependent manner. This free nitric oxide is then capable of cleaving the heparan sulfate side chains. N- and O-glycosylated. N-glycosylation is mainly of the complex type containing sialic acid. O-glycosylated with heparan sulfate. The heparan sulfate chains can be cleaved either by the action of heparanase or, degraded by a deaminative process that uses nitric oxide (NO) released from the S-nitrosylated cysteines. This process is triggered by ascorbate, or by some other reducing agent, in a Cu(2+)- or Zn(2+) dependent manner. Cu(2+) ions are provided by ceruloproteins such as APP, PRNP or CP which associate with GCP1 in intracellular compartments or lipid rafts. In terms of processing, this cell-associated glypican is further processed to give rise to a medium-released species. In terms of tissue distribution, nervous system.

Its subcellular location is the cell membrane. It is found in the endosome. The protein localises to the secreted. It localises to the extracellular space. In terms of biological role, cell surface proteoglycan that bears heparan sulfate. May act as a catalyst in increasing the rate of conversion of prion protein PRPN(C) to PRNP(Sc) via associating (via the heparan sulfate side chains) with both forms of PRPN, targeting them to lipid rafts and facilitating their interaction. Required for proper skeletal muscle differentiation by sequestering FGF2 in lipid rafts preventing its binding to receptors (FGFRs) and inhibiting the FGF-mediated signaling. Binds Cu(2+) or Zn(2+) ions. Binds, via the heparan sulfate side chains, alpha-4 (V) collagen and participates in Schwann cell myelination. The polypeptide is Glypican-1 (Gpc1) (Rattus norvegicus (Rat)).